Here is a 564-residue protein sequence, read N- to C-terminus: Arrestin domain-containing protein E (564 aa).

The span at 74–146 (SQQPQSSQPS…NTSNGFSPPN (73 aa)) shows a compositional bias: low complexity. Disordered regions lie at residues 74–150 (SQQP…LNKN) and 245–286 (ASQP…SFPS). Over residues 250–259 (PQQPQQPQPQ) the composition is skewed to pro residues. Over residues 260 to 269 (QPQQQQFQQQ) the composition is skewed to low complexity. Over residues 270–285 (SYNNNNSTQSMLSSFP) the composition is skewed to polar residues. Residues 348 to 413 (DKCAACDALL…PMCFESTTGL (66 aa)) enclose the LIM zinc-binding domain.

The polypeptide is Arrestin domain-containing protein E (adcE) (Dictyostelium discoideum (Social amoeba)).